The sequence spans 681 residues: DNA-directed RNA polymerase subunit beta' (681 aa).

Zn(2+) contacts are provided by cysteine 69, cysteine 71, cysteine 87, and cysteine 90. Residues aspartate 490, aspartate 492, and aspartate 494 each coordinate Mg(2+).

It belongs to the RNA polymerase beta' chain family. RpoC1 subfamily. In terms of assembly, in plastids the minimal PEP RNA polymerase catalytic core is composed of four subunits: alpha, beta, beta', and beta''. When a (nuclear-encoded) sigma factor is associated with the core the holoenzyme is formed, which can initiate transcription. It depends on Mg(2+) as a cofactor. Zn(2+) is required as a cofactor.

The protein localises to the plastid. Its subcellular location is the chloroplast. The enzyme catalyses RNA(n) + a ribonucleoside 5'-triphosphate = RNA(n+1) + diphosphate. In terms of biological role, DNA-dependent RNA polymerase catalyzes the transcription of DNA into RNA using the four ribonucleoside triphosphates as substrates. The polypeptide is DNA-directed RNA polymerase subunit beta' (Liriodendron tulipifera (Tuliptree)).